The primary structure comprises 2298 residues: Protein Ycf2 (2298 aa).

Residue Gly-1637 to Ser-1644 participates in ATP binding.

The protein belongs to the Ycf2 family.

It is found in the plastid. The protein resides in the chloroplast stroma. Functionally, probable ATPase of unknown function. Its presence in a non-photosynthetic plant (Epifagus virginiana) and experiments in tobacco indicate that it has an essential function which is probably not related to photosynthesis. This is Protein Ycf2 from Lotus japonicus (Lotus corniculatus var. japonicus).